Consider the following 869-residue polypeptide: Dimethylglycine dehydrogenase, mitochondrial (869 aa).

The N-terminal 43 residues, 1-43 (MLRPGALRLRGLALRGSPRRPSSAGLREGQESPASPPEWKDRA), are a transit peptide targeting the mitochondrion. The interval 14-39 (LRGSPRRPSSAGLREGQESPASPPEW) is disordered. FAD is bound by residues 52 to 53 (CV), 73 to 74 (EK), and 80 to 88 (GSTWHAAGL). His-84 carries the tele-8alpha-FAD histidine modification. Position 107 is an N6-acetyllysine (Lys-107). Lys-141 carries the post-translational modification N6-acetyllysine; alternate. Lys-141 is subject to N6-succinyllysine; alternate. Lys-161 is subject to N6-acetyllysine. Val-212 is a binding site for FAD. Lys-216 is modified (N6-acetyllysine). An FAD-binding site is contributed by Trp-244. N6-succinyllysine occurs at positions 310 and 312. An N6-acetyllysine mark is found at Lys-328 and Lys-353. 390-395 (FGYGII) lines the FAD pocket. N6-acetyllysine; alternate is present on residues Lys-427, Lys-469, and Lys-516. N6-succinyllysine; alternate occurs at positions 427, 469, and 516. (6S)-5,6,7,8-tetrahydrofolate is bound at residue 573–575 (ELT). Lys-648 carries the post-translational modification N6-acetyllysine; alternate. The residue at position 648 (Lys-648) is an N6-succinyllysine; alternate. (6S)-5,6,7,8-tetrahydrofolate is bound by residues Tyr-669, 676 to 678 (ELY), and Tyr-737. Lys-757 bears the N6-acetyllysine mark. Lys-786 bears the N6-acetyllysine; alternate mark. Lys-786 carries the N6-succinyllysine; alternate modification. Lys-788 carries the N6-succinyllysine modification.

The protein belongs to the GcvT family. It depends on FAD as a cofactor.

The protein localises to the mitochondrion. It carries out the reaction (6S)-5,6,7,8-tetrahydrofolyl-(gamma-L-Glu)(n) + N,N-dimethylglycine + oxidized [electron-transfer flavoprotein] + H(+) = (6R)-5,10-methylenetetrahydrofolyl-(gamma-L-Glu)(n) + sarcosine + reduced [electron-transfer flavoprotein]. Its pathway is amine and polyamine degradation; betaine degradation; sarcosine from betaine: step 2/2. Catalyzes the demethylation of N,N-dimethylglycine to sarcosine. Also has activity with sarcosine in vitro. This chain is Dimethylglycine dehydrogenase, mitochondrial (Dmgdh), found in Mus musculus (Mouse).